A 141-amino-acid chain; its full sequence is Putative nickel-responsive regulator (141 aa).

Residues histidine 80, histidine 91, histidine 93, and cysteine 99 each coordinate Ni(2+).

Belongs to the transcriptional regulatory CopG/NikR family. Ni(2+) serves as cofactor.

Its function is as follows. Transcriptional regulator. This Methanococcus maripaludis (strain C5 / ATCC BAA-1333) protein is Putative nickel-responsive regulator.